Consider the following 369-residue polypeptide: Probable dual-specificity RNA methyltransferase RlmN (369 aa).

E108 (proton acceptor) is an active-site residue. A Radical SAM core domain is found at 114 to 351 (YPDRATLCIS…LAQGVSCTVR (238 aa)). A disulfide bridge connects residues C121 and C362. C128, C132, and C135 together coordinate [4Fe-4S] cluster. Residues 183–184 (GE), S217, 240–242 (SLH), and N319 each bind S-adenosyl-L-methionine. The active-site S-methylcysteine intermediate is C362.

The protein belongs to the radical SAM superfamily. RlmN family. The cofactor is [4Fe-4S] cluster.

It is found in the cytoplasm. It catalyses the reaction adenosine(2503) in 23S rRNA + 2 reduced [2Fe-2S]-[ferredoxin] + 2 S-adenosyl-L-methionine = 2-methyladenosine(2503) in 23S rRNA + 5'-deoxyadenosine + L-methionine + 2 oxidized [2Fe-2S]-[ferredoxin] + S-adenosyl-L-homocysteine. The catalysed reaction is adenosine(37) in tRNA + 2 reduced [2Fe-2S]-[ferredoxin] + 2 S-adenosyl-L-methionine = 2-methyladenosine(37) in tRNA + 5'-deoxyadenosine + L-methionine + 2 oxidized [2Fe-2S]-[ferredoxin] + S-adenosyl-L-homocysteine. Specifically methylates position 2 of adenine 2503 in 23S rRNA and position 2 of adenine 37 in tRNAs. This chain is Probable dual-specificity RNA methyltransferase RlmN, found in Rhodococcus opacus (strain B4).